The chain runs to 325 residues: Pseudouridylate synthase TRUB2, mitochondrial (325 aa).

D101 functions as the Nucleophile in the catalytic mechanism. Residues 292–325 (QTEGVSRGNPDREAAEGPIPGPSRGAEGEGELRA) are disordered.

This sequence belongs to the pseudouridine synthase TruB family.

It localises to the mitochondrion matrix. It carries out the reaction a uridine in mRNA = a pseudouridine in mRNA. The catalysed reaction is uridine(55) in tRNA = pseudouridine(55) in tRNA. Its function is as follows. Minor enzyme contributing to the isomerization of uridine to pseudouridine (pseudouridylation) of specific mitochondrial mRNAs (mt-mRNAs) such as COXI and COXIII mt-mRNAs, modulating the efficiency of mitochondrial protein synthesis without changes in transcript abundance or stability. Also catalyzes pseudouridylation of some tRNAs, including synthesis of pseudouridine(55) from uracil-55, in the psi GC loop of a subset of tRNAs. The protein is Pseudouridylate synthase TRUB2, mitochondrial of Xenopus tropicalis (Western clawed frog).